The following is a 381-amino-acid chain: Chaperone protein DnaJ (381 aa).

The J domain occupies 5–70 (DYYDVLGVSK…EKKAAYDRFG (66 aa)). Residues 140-218 (GLQKTINVPT…CRGQGRVEKD (79 aa)) form a CR-type zinc finger. 8 residues coordinate Zn(2+): Cys-153, Cys-156, Cys-170, Cys-173, Cys-192, Cys-195, Cys-206, and Cys-209. CXXCXGXG motif repeat units follow at residues 153–160 (CSSCEGTG), 170–177 (CPTCSGMG), 192–199 (CPTCSGLG), and 206–213 (CKSCRGQG).

Belongs to the DnaJ family. In terms of assembly, homodimer. The cofactor is Zn(2+).

The protein resides in the cytoplasm. Participates actively in the response to hyperosmotic and heat shock by preventing the aggregation of stress-denatured proteins and by disaggregating proteins, also in an autonomous, DnaK-independent fashion. Unfolded proteins bind initially to DnaJ; upon interaction with the DnaJ-bound protein, DnaK hydrolyzes its bound ATP, resulting in the formation of a stable complex. GrpE releases ADP from DnaK; ATP binding to DnaK triggers the release of the substrate protein, thus completing the reaction cycle. Several rounds of ATP-dependent interactions between DnaJ, DnaK and GrpE are required for fully efficient folding. Also involved, together with DnaK and GrpE, in the DNA replication of plasmids through activation of initiation proteins. In Ruegeria pomeroyi (strain ATCC 700808 / DSM 15171 / DSS-3) (Silicibacter pomeroyi), this protein is Chaperone protein DnaJ.